We begin with the raw amino-acid sequence, 431 residues long: Adenylosuccinate synthetase (431 aa).

GTP contacts are provided by residues 13–19 and 41–43; these read GDEGKGK and GHT. The Proton acceptor role is filled by Asp14. Residues Asp14 and Gly41 each contribute to the Mg(2+) site. IMP-binding positions include 14-17, 39-42, Thr130, Arg144, Gln225, Thr240, and Arg304; these read DEGK and NAGH. The active-site Proton donor is the His42. 300-306 provides a ligand contact to substrate; that stretch reads ATTGRKR. Residues Arg306, 332–334, and 415–417 contribute to the GTP site; these read KLD and STG.

The protein belongs to the adenylosuccinate synthetase family. In terms of assembly, homodimer. Requires Mg(2+) as cofactor.

The protein resides in the cytoplasm. It carries out the reaction IMP + L-aspartate + GTP = N(6)-(1,2-dicarboxyethyl)-AMP + GDP + phosphate + 2 H(+). It functions in the pathway purine metabolism; AMP biosynthesis via de novo pathway; AMP from IMP: step 1/2. Plays an important role in the de novo pathway of purine nucleotide biosynthesis. Catalyzes the first committed step in the biosynthesis of AMP from IMP. This Shewanella denitrificans (strain OS217 / ATCC BAA-1090 / DSM 15013) protein is Adenylosuccinate synthetase.